We begin with the raw amino-acid sequence, 409 residues long: Arginine deiminase (409 aa).

Cys-399 serves as the catalytic Amidino-cysteine intermediate.

Belongs to the arginine deiminase family.

It localises to the cytoplasm. The catalysed reaction is L-arginine + H2O = L-citrulline + NH4(+). It participates in amino-acid degradation; L-arginine degradation via ADI pathway; carbamoyl phosphate from L-arginine: step 1/2. This is Arginine deiminase (arcA) from Borreliella afzelii (Borrelia afzelii).